Reading from the N-terminus, the 317-residue chain is Acetyl-coenzyme A carboxylase carboxyl transferase subunit alpha (317 aa).

The 255-residue stretch at Lys-39–Arg-293 folds into the CoA carboxyltransferase C-terminal domain.

The protein belongs to the AccA family. Acetyl-CoA carboxylase is a heterohexamer composed of biotin carboxyl carrier protein (AccB), biotin carboxylase (AccC) and two subunits each of ACCase subunit alpha (AccA) and ACCase subunit beta (AccD).

It localises to the cytoplasm. The enzyme catalyses N(6)-carboxybiotinyl-L-lysyl-[protein] + acetyl-CoA = N(6)-biotinyl-L-lysyl-[protein] + malonyl-CoA. It functions in the pathway lipid metabolism; malonyl-CoA biosynthesis; malonyl-CoA from acetyl-CoA: step 1/1. Its function is as follows. Component of the acetyl coenzyme A carboxylase (ACC) complex. First, biotin carboxylase catalyzes the carboxylation of biotin on its carrier protein (BCCP) and then the CO(2) group is transferred by the carboxyltransferase to acetyl-CoA to form malonyl-CoA. The protein is Acetyl-coenzyme A carboxylase carboxyl transferase subunit alpha of Chromohalobacter salexigens (strain ATCC BAA-138 / DSM 3043 / CIP 106854 / NCIMB 13768 / 1H11).